Here is a 360-residue protein sequence, read N- to C-terminus: Peptide chain release factor 1 (360 aa).

N5-methylglutamine is present on Gln-235. Basic and acidic residues predominate over residues 283-308 (MQKRQQAEASERRNLLGSGDRSDRNR). The segment at 283–313 (MQKRQQAEASERRNLLGSGDRSDRNRTYNFP) is disordered.

Belongs to the prokaryotic/mitochondrial release factor family. In terms of processing, methylated by PrmC. Methylation increases the termination efficiency of RF1.

The protein resides in the cytoplasm. Peptide chain release factor 1 directs the termination of translation in response to the peptide chain termination codons UAG and UAA. The chain is Peptide chain release factor 1 from Yersinia enterocolitica serotype O:8 / biotype 1B (strain NCTC 13174 / 8081).